We begin with the raw amino-acid sequence, 146 residues long: Hemoglobin subunit beta-1 (146 aa).

The region spanning 2-146 (EWTDKERAII…VVSALGKQYH (145 aa)) is the Globin domain. The heme b site is built by His-63 and His-92.

Belongs to the globin family. Hb 1 is a heterotetramer of two alpha-1 and two beta-1 chains. As to expression, red blood cells.

Involved in oxygen transport from gills to the various peripheral tissues. In Gobionotothen gibberifrons (Humped rockcod), this protein is Hemoglobin subunit beta-1 (hbb1).